We begin with the raw amino-acid sequence, 201 residues long: Glutathione peroxidase 1 (201 aa).

S32 carries the post-translational modification Phosphoserine. U47 is a catalytic residue. U47 is a non-standard amino acid (selenocysteine). N6-acetyllysine; alternate occurs at positions 86, 112, and 146. 3 positions are modified to N6-succinyllysine; alternate: K86, K112, and K146. Residues S195 and S199 each carry the phosphoserine modification.

This sequence belongs to the glutathione peroxidase family. As to quaternary structure, homotetramer. Interacts with MIEN1. During periods of oxidative stress, Sec-47 may react with a superoxide radical, irreversibly lose hydroselenide and be converted to dehydroalanine.

The protein resides in the cytoplasm. The catalysed reaction is 2 glutathione + H2O2 = glutathione disulfide + 2 H2O. It carries out the reaction (12S)-hydroperoxy-(5Z,8Z,10E,14Z)-eicosatetraenoate + 2 glutathione = (12S)-hydroxy-(5Z,8Z,10E,14Z)-eicosatetraenoate + glutathione disulfide + H2O. In terms of biological role, protects the hemoglobin in erythrocytes from oxidative breakdown. In platelets, plays a crucial role of glutathione peroxidase in the arachidonic acid metabolism. The protein is Glutathione peroxidase 1 (GPX1) of Hylobates lar (Lar gibbon).